A 468-amino-acid chain; its full sequence is ATP synthase subunit beta (468 aa).

155–162 (GGAGVGKT) provides a ligand contact to ATP.

It belongs to the ATPase alpha/beta chains family. F-type ATPases have 2 components, CF(1) - the catalytic core - and CF(0) - the membrane proton channel. CF(1) has five subunits: alpha(3), beta(3), gamma(1), delta(1), epsilon(1). CF(0) has three main subunits: a(1), b(2) and c(9-12). The alpha and beta chains form an alternating ring which encloses part of the gamma chain. CF(1) is attached to CF(0) by a central stalk formed by the gamma and epsilon chains, while a peripheral stalk is formed by the delta and b chains.

Its subcellular location is the cell membrane. The enzyme catalyses ATP + H2O + 4 H(+)(in) = ADP + phosphate + 5 H(+)(out). Its function is as follows. Produces ATP from ADP in the presence of a proton gradient across the membrane. The catalytic sites are hosted primarily by the beta subunits. This Bacillus cereus (strain ATCC 10987 / NRS 248) protein is ATP synthase subunit beta.